Here is a 220-residue protein sequence, read N- to C-terminus: Thymidylate kinase (220 aa).

10 to 17 (GIDGCGKS) provides a ligand contact to ATP.

This sequence belongs to the thymidylate kinase family.

It carries out the reaction dTMP + ATP = dTDP + ADP. Its function is as follows. Phosphorylation of dTMP to form dTDP in both de novo and salvage pathways of dTTP synthesis. The chain is Thymidylate kinase from Prochlorococcus marinus (strain SARG / CCMP1375 / SS120).